The chain runs to 256 residues: Floral homeotic protein APETALA 1 (256 aa).

The 61-residue stretch at 1 to 61 (MGRGRVQLKR…GKLFEYSTDS (61 aa)) folds into the MADS-box domain. One can recognise a K-box domain in the interval 88 to 178 (NTNWSMEYNR…SKQIKEREKV (91 aa)). The segment at 180-206 (RAQQEQWDQQNHGQNMPPPPPPQEHQI) is disordered.

As to quaternary structure, homodimer capable of binding to CArG-box sequences.

Its subcellular location is the nucleus. Functionally, transcription factor that promotes early floral meristem identity in synergy with LEAFY. Displays a redundant function with CAULIFLOWER in the up-regulation of LEAFY. Required subsequently for the transition of an inflorescence meristem into a floral meristem, and for the normal development of sepals and petals in flowers. Regulates positively B class homeotic proteins. The protein is Floral homeotic protein APETALA 1 (AP1) of Brassica rapa subsp. pekinensis (Chinese cabbage).